Consider the following 909-residue polypeptide: Ribosome-releasing factor 2, mitochondrial (909 aa).

A mitochondrion-targeting transit peptide spans 1–15; the sequence is MVAAPLLRAHQAARL. A tr-type G domain is found at 57–367; it reads DRTRNIGIIA…AVTNLLPSPP (311 aa). 66–73 serves as a coordination point for GTP; it reads AHIDAGKT. Residues 121–148 are disordered; sequence WPPQTAGDGNTTPQEPQTPRSASSHTVN. The span at 127–148 shows a compositional bias: polar residues; sequence GDGNTTPQEPQTPRSASSHTVN. Residues 151-155 and 205-208 contribute to the GTP site; these read DTPGH and NKLD.

Belongs to the TRAFAC class translation factor GTPase superfamily. Classic translation factor GTPase family. EF-G/EF-2 subfamily.

Its subcellular location is the mitochondrion. Its function is as follows. Mitochondrial GTPase that mediates the disassembly of ribosomes from messenger RNA at the termination of mitochondrial protein biosynthesis. Not involved in the GTP-dependent ribosomal translocation step during translation elongation. The sequence is that of Ribosome-releasing factor 2, mitochondrial (mef2) from Aspergillus flavus (strain ATCC 200026 / FGSC A1120 / IAM 13836 / NRRL 3357 / JCM 12722 / SRRC 167).